The primary structure comprises 205 residues: Glycerol-3-phosphate acyltransferase (205 aa).

4 helical membrane-spanning segments follow: residues 4-24, 80-100, 112-132, and 138-158; these read IAPG…AILV, PFWL…PIFF, FGAI…TWLL, and GYSS…VWWF.

It belongs to the PlsY family. As to quaternary structure, probably interacts with PlsX.

Its subcellular location is the cell inner membrane. The enzyme catalyses an acyl phosphate + sn-glycerol 3-phosphate = a 1-acyl-sn-glycero-3-phosphate + phosphate. It functions in the pathway lipid metabolism; phospholipid metabolism. Functionally, catalyzes the transfer of an acyl group from acyl-phosphate (acyl-PO(4)) to glycerol-3-phosphate (G3P) to form lysophosphatidic acid (LPA). This enzyme utilizes acyl-phosphate as fatty acyl donor, but not acyl-CoA or acyl-ACP. In Cronobacter sakazakii (strain ATCC BAA-894) (Enterobacter sakazakii), this protein is Glycerol-3-phosphate acyltransferase.